We begin with the raw amino-acid sequence, 434 residues long: Histidinol dehydrogenase (434 aa).

Residues Tyr-130, Gln-192, and Asn-215 each contribute to the NAD(+) site. Residues Ser-238, Gln-260, and His-263 each coordinate substrate. Zn(2+) contacts are provided by Gln-260 and His-263. Catalysis depends on proton acceptor residues Glu-328 and His-329. Substrate-binding residues include His-329, Asp-362, Glu-416, and His-421. Asp-362 contacts Zn(2+). His-421 is a binding site for Zn(2+).

The protein belongs to the histidinol dehydrogenase family. Zn(2+) is required as a cofactor.

It carries out the reaction L-histidinol + 2 NAD(+) + H2O = L-histidine + 2 NADH + 3 H(+). It functions in the pathway amino-acid biosynthesis; L-histidine biosynthesis; L-histidine from 5-phospho-alpha-D-ribose 1-diphosphate: step 9/9. Its function is as follows. Catalyzes the sequential NAD-dependent oxidations of L-histidinol to L-histidinaldehyde and then to L-histidine. The chain is Histidinol dehydrogenase from Synechococcus sp. (strain ATCC 27144 / PCC 6301 / SAUG 1402/1) (Anacystis nidulans).